A 444-amino-acid chain; its full sequence is Putative cytochrome P450 120 (444 aa).

C391 is a heme binding site.

Belongs to the cytochrome P450 family. Heme is required as a cofactor.

This chain is Putative cytochrome P450 120 (cyp120), found in Synechocystis sp. (strain ATCC 27184 / PCC 6803 / Kazusa).